Here is a 619-residue protein sequence, read N- to C-terminus: Mitochondrial Rho GTPase 1-A (619 aa).

The Cytoplasmic segment spans residues 1–593 (MRKDVRILLV…TQADLKNSTF (593 aa)). A Miro 1 domain is found at 2–168 (RKDVRILLVG…FYYAQKAVLH (167 aa)). The GTP site is built by Lys14, Gly16, Lys17, Thr18, and Ser19. Thr18 serves as a coordination point for Mg(2+). The Mg(2+) site is built by Pro35 and Asp57. GTP is bound by residues Ser59, Asn118, Lys119, Asp121, Ala149, and Lys150. EF-hand domains are found at residues 184–219 (SCIKALTRIFKISDLDNDGILNDNELNFFQRTCFNI) and 304–339 (NAYLFLQSVFDKHDKDRDCALSPDELKDLFKVFPYM). Asp197, Asp199, Asp201, Glu208, Asp317, Asp319, Asp321, Ala323, and Glu328 together coordinate Ca(2+). The Miro 2 domain maps to 416–580 (RSVFRCNVLG…YTKLTTMAMY (165 aa)). 11 residues coordinate GTP: Arg427, Cys429, Gly430, Lys431, Ser432, Gly433, Lys447, Lys529, Asp531, Thr559, and Cys560. Arg427 serves as a coordination point for Mg(2+). A helical; Anchor for type IV membrane protein membrane pass occupies residues 594–616 (WLRASVGATVFAVLGFAMYKALL). The Mitochondrial intermembrane portion of the chain corresponds to 617–619 (KQR).

Belongs to the mitochondrial Rho GTPase family. Homodimer.

The protein localises to the mitochondrion outer membrane. The enzyme catalyses GTP + H2O = GDP + phosphate + H(+). It catalyses the reaction ATP + H2O = ADP + phosphate + H(+). It carries out the reaction UTP + H2O = UDP + phosphate + H(+). Functionally, atypical mitochondrial nucleoside-triphosphatase (NTPase) involved in mitochondrial trafficking. Probably involved in control of anterograde transport of mitochondria and their subcellular distribution. Can hydrolyze GTP, ATP and UTP. In Danio rerio (Zebrafish), this protein is Mitochondrial Rho GTPase 1-A (rhot1a).